Here is a 239-residue protein sequence, read N- to C-terminus: Uridylate kinase (239 aa).

Residue 12-15 (KLSG) participates in ATP binding. An involved in allosteric activation by GTP region spans residues 20–25 (GEKGFG). A UMP-binding site is contributed by glycine 54. ATP-binding residues include glycine 55 and arginine 59. Residues aspartate 72 and 133 to 140 (TGNPFFST) contribute to the UMP site. Residues tyrosine 166 and aspartate 169 each coordinate ATP.

It belongs to the UMP kinase family. Homohexamer.

Its subcellular location is the cytoplasm. The catalysed reaction is UMP + ATP = UDP + ADP. It functions in the pathway pyrimidine metabolism; CTP biosynthesis via de novo pathway; UDP from UMP (UMPK route): step 1/1. Allosterically activated by GTP. Inhibited by UTP. Its function is as follows. Catalyzes the reversible phosphorylation of UMP to UDP. The polypeptide is Uridylate kinase (Caldicellulosiruptor saccharolyticus (strain ATCC 43494 / DSM 8903 / Tp8T 6331)).